We begin with the raw amino-acid sequence, 363 residues long: 3-ketodihydrosphingosine reductase TSC10 (363 aa).

Leu10 provides a ligand contact to NADP(+). NADPH is bound by residues Gly13, Ser15, and Gly17. Residues 13–17 carry the GXSXG motif; the sequence is GGSQG. Leu18 provides a ligand contact to NADP(+). NADPH is bound by residues Arg40, Lys44, Asp131, and Leu132. NADP(+) is bound at residue Asp131. Residue Ser206 is the Proton donor of the active site. NADP(+) is bound by residues Tyr220, Lys224, and Ser253. Residue Tyr220 is the Proton acceptor of the active site. Lys224 acts as the Lowers pKa of active site Tyr in catalysis. The chain crosses the membrane as a helical span at residues 324-344; the sequence is FVQWLIGVIANLLVVPFYMVL.

It belongs to the short-chain dehydrogenases/reductases (SDR) family.

It is found in the endoplasmic reticulum membrane. The catalysed reaction is sphinganine + NADP(+) = 3-oxosphinganine + NADPH + H(+). Its pathway is lipid metabolism; sphingolipid metabolism. In terms of biological role, catalyzes the reduction of 3'-oxosphinganine (3-ketodihydrosphingosine/KDS) to sphinganine (dihydrosphingosine/DHS), the second step of de novo sphingolipid biosynthesis. This chain is 3-ketodihydrosphingosine reductase TSC10 (TSC10), found in Candida glabrata (strain ATCC 2001 / BCRC 20586 / JCM 3761 / NBRC 0622 / NRRL Y-65 / CBS 138) (Yeast).